The sequence spans 283 residues: Pantothenate synthetase (283 aa).

26–33 (MGNLHDGH) lines the ATP pocket. The active-site Proton donor is His-33. (R)-pantoate is bound at residue Gln-57. Gln-57 is a beta-alanine binding site. 148–151 (GKKD) provides a ligand contact to ATP. Gln-154 serves as a coordination point for (R)-pantoate. Residues Ala-177 and 185 to 188 (LSSR) contribute to the ATP site.

The protein belongs to the pantothenate synthetase family. Homodimer.

The protein resides in the cytoplasm. It catalyses the reaction (R)-pantoate + beta-alanine + ATP = (R)-pantothenate + AMP + diphosphate + H(+). It functions in the pathway cofactor biosynthesis; (R)-pantothenate biosynthesis; (R)-pantothenate from (R)-pantoate and beta-alanine: step 1/1. In terms of biological role, catalyzes the condensation of pantoate with beta-alanine in an ATP-dependent reaction via a pantoyl-adenylate intermediate. This is Pantothenate synthetase from Delftia acidovorans (strain DSM 14801 / SPH-1).